We begin with the raw amino-acid sequence, 450 residues long: Phosphoglucosamine mutase (450 aa).

Residue Ser-101 is the Phosphoserine intermediate of the active site. Mg(2+)-binding residues include Ser-101, Asp-240, Asp-242, and Asp-244. Ser-101 carries the post-translational modification Phosphoserine.

This sequence belongs to the phosphohexose mutase family. Mg(2+) is required as a cofactor. Post-translationally, activated by phosphorylation.

The catalysed reaction is alpha-D-glucosamine 1-phosphate = D-glucosamine 6-phosphate. Functionally, catalyzes the conversion of glucosamine-6-phosphate to glucosamine-1-phosphate. The protein is Phosphoglucosamine mutase of Streptococcus thermophilus (strain CNRZ 1066).